A 244-amino-acid polypeptide reads, in one-letter code: Triosephosphate isomerase (244 aa).

Position 9-11 (Asn-9–Lys-11) interacts with substrate. Catalysis depends on His-93, which acts as the Electrophile. Catalysis depends on Glu-161, which acts as the Proton acceptor. Residues Gly-167, Ser-206, and Gly-227–Gly-228 contribute to the substrate site.

The protein belongs to the triosephosphate isomerase family. As to quaternary structure, homodimer.

The protein localises to the cytoplasm. The enzyme catalyses D-glyceraldehyde 3-phosphate = dihydroxyacetone phosphate. It functions in the pathway carbohydrate biosynthesis; gluconeogenesis. The protein operates within carbohydrate degradation; glycolysis; D-glyceraldehyde 3-phosphate from glycerone phosphate: step 1/1. Involved in the gluconeogenesis. Catalyzes stereospecifically the conversion of dihydroxyacetone phosphate (DHAP) to D-glyceraldehyde-3-phosphate (G3P). This chain is Triosephosphate isomerase, found in Deinococcus geothermalis (strain DSM 11300 / CIP 105573 / AG-3a).